A 259-amino-acid chain; its full sequence is UPF0758 protein Bphyt_3148 (259 aa).

One can recognise an MPN domain in the interval 137 to 259 (LLNSPEAVEN…VYSFARAGWP (123 aa)). Zn(2+)-binding residues include His208, His210, and Asp221. The JAMM motif signature appears at 208–221 (HNHPSGAVQPSASD).

Belongs to the UPF0758 family.

The chain is UPF0758 protein Bphyt_3148 from Paraburkholderia phytofirmans (strain DSM 17436 / LMG 22146 / PsJN) (Burkholderia phytofirmans).